The following is a 57-amino-acid chain: Andropin (57 aa).

An N-terminal signal peptide occupies residues 1 to 23; it reads MKYFVVLVVLALILAITVGPSDA.

The protein belongs to the andropin family. As to expression, ejaculatory duct of adult males.

The protein resides in the secreted. Male-specific peptide with moderate activity against Gram-positive bacteria. The protein is Andropin (Anp) of Drosophila mauritiana (Fruit fly).